The primary structure comprises 150 residues: Transcriptional repressor NrdR (150 aa).

A zinc finger spans residues 3-34 (CPFCGQLDSKVVDSRPDKGGAAIRRRRECESC). Residues 49 to 139 (PLVLKKDGRR…VYRSFKDVNE (91 aa)) enclose the ATP-cone domain.

The protein belongs to the NrdR family. Zn(2+) serves as cofactor.

In terms of biological role, negatively regulates transcription of bacterial ribonucleotide reductase nrd genes and operons by binding to NrdR-boxes. This is Transcriptional repressor NrdR from Geobacter sulfurreducens (strain ATCC 51573 / DSM 12127 / PCA).